Consider the following 193-residue polypeptide: MLPLTAAITAGGASSRFGSDKALALWQGRPLLDQVAAGLAACERRLLIAPPGKYALPGWETWPDTRPGEGPLAGLEVALTHAAPGWVAFTGVDNPALTSDYWLTLLAACRPGMSSVQALHPERGPQPLGALYHTALLPRVTGLLAAGERRLRLTAPAEQTVLVTGLGAHFFQNVNRPADLAELSGRGEESLEV.

GTP is bound by residues 9-11, Lys-21, Asp-64, and Asp-93; that span reads TAG. Residue Asp-93 participates in Mg(2+) binding.

It belongs to the MobA family. Mg(2+) serves as cofactor.

It localises to the cytoplasm. The catalysed reaction is Mo-molybdopterin + GTP + H(+) = Mo-molybdopterin guanine dinucleotide + diphosphate. In terms of biological role, transfers a GMP moiety from GTP to Mo-molybdopterin (Mo-MPT) cofactor (Moco or molybdenum cofactor) to form Mo-molybdopterin guanine dinucleotide (Mo-MGD) cofactor. This Deinococcus radiodurans (strain ATCC 13939 / DSM 20539 / JCM 16871 / CCUG 27074 / LMG 4051 / NBRC 15346 / NCIMB 9279 / VKM B-1422 / R1) protein is Probable molybdenum cofactor guanylyltransferase.